The sequence spans 556 residues: Sphingomyelinase C (556 aa).

The first 27 residues, 1–27 (MRIKKYTKVRLLVNCCLLLFFLIDCGA), serve as a signal peptide directing secretion.

It is found in the secreted. The enzyme catalyses a sphingomyelin + H2O = phosphocholine + an N-acylsphing-4-enine + H(+). The chain is Sphingomyelinase C (sph) from Leptospira interrogans.